We begin with the raw amino-acid sequence, 530 residues long: ATP synthase subunit alpha (530 aa).

Residue 169–176 participates in ATP binding; it reads GDRQTGKT.

This sequence belongs to the ATPase alpha/beta chains family. As to quaternary structure, F-type ATPases have 2 components, CF(1) - the catalytic core - and CF(0) - the membrane proton channel. CF(1) has five subunits: alpha(3), beta(3), gamma(1), delta(1), epsilon(1). CF(0) has three main subunits: a(1), b(2) and c(9-12). The alpha and beta chains form an alternating ring which encloses part of the gamma chain. CF(1) is attached to CF(0) by a central stalk formed by the gamma and epsilon chains, while a peripheral stalk is formed by the delta and b chains.

Its subcellular location is the cell membrane. It catalyses the reaction ATP + H2O + 4 H(+)(in) = ADP + phosphate + 5 H(+)(out). In terms of biological role, produces ATP from ADP in the presence of a proton gradient across the membrane. The alpha chain is a regulatory subunit. The sequence is that of ATP synthase subunit alpha from Mycoplasmopsis synoviae (strain 53) (Mycoplasma synoviae).